The chain runs to 137 residues: Urease subunit beta (137 aa).

The tract at residues 113-137 is disordered; it reads NGHPNAGVKNDEGKQNANKESGDNR.

It belongs to the urease beta subunit family. As to quaternary structure, heterotrimer of UreA (gamma), UreB (beta) and UreC (alpha) subunits. Three heterotrimers associate to form the active enzyme.

Its subcellular location is the cytoplasm. It catalyses the reaction urea + 2 H2O + H(+) = hydrogencarbonate + 2 NH4(+). It functions in the pathway nitrogen metabolism; urea degradation; CO(2) and NH(3) from urea (urease route): step 1/1. In Staphylococcus carnosus (strain TM300), this protein is Urease subunit beta.